Here is a 591-residue protein sequence, read N- to C-terminus: Polyphenol oxidase D, chloroplastic (591 aa).

The N-terminal 83 residues, 1–83 (MASLCSNSST…ANAIPLAASA (83 aa)), are a transit peptide targeting the chloroplast. 2 disulfides stabilise this stretch: cysteine 94–cysteine 110 and cysteine 109–cysteine 177. Residues histidine 176, histidine 194, histidine 203, histidine 324, histidine 328, and histidine 366 each contribute to the Cu cation site. Residues 180–194 (CNGAYRIGGKELQVH) constitute a cross-link (2'-(S-cysteinyl)-histidine (Cys-His)).

It belongs to the tyrosinase family. Cu(2+) is required as a cofactor.

Its subcellular location is the plastid. It is found in the chloroplast thylakoid lumen. It catalyses the reaction 2 catechol + O2 = 2 1,2-benzoquinone + 2 H2O. Functionally, catalyzes the oxidation of mono- and o-diphenols to o-diquinones. This Solanum lycopersicum (Tomato) protein is Polyphenol oxidase D, chloroplastic.